The primary structure comprises 396 residues: Maltose/maltodextrin-binding periplasmic protein (396 aa).

The N-terminal stretch at 1–26 is a signal peptide; the sequence is MKIKTGVGILALSALTTMMISAPALA.

The protein belongs to the bacterial solute-binding protein 1 family. As to quaternary structure, the complex is composed of two ATP-binding proteins (MalK), two transmembrane proteins (MalG and MalF) and a solute-binding protein (MalE).

Its subcellular location is the periplasm. Its function is as follows. Part of the ABC transporter complex MalEFGK involved in maltose/maltodextrin import. Binds maltose and higher maltodextrins. This chain is Maltose/maltodextrin-binding periplasmic protein (malE), found in Salmonella typhimurium (strain LT2 / SGSC1412 / ATCC 700720).